The primary structure comprises 188 residues: dCTP deaminase (188 aa).

DCTP is bound at residue 109–114 (KSTYAR). Glu135 acts as the Proton donor/acceptor in catalysis. Positions 154, 168, and 178 each coordinate dCTP.

The protein belongs to the dCTP deaminase family. Homotrimer.

The catalysed reaction is dCTP + H2O + H(+) = dUTP + NH4(+). It functions in the pathway pyrimidine metabolism; dUMP biosynthesis; dUMP from dCTP (dUTP route): step 1/2. Catalyzes the deamination of dCTP to dUTP. The polypeptide is dCTP deaminase (Helicobacter pylori (strain G27)).